The primary structure comprises 67 residues: Large ribosomal subunit protein bL32 (67 aa).

A compositionally biased stretch (basic residues) spans 1-19 (MAVPKRKMSRSNTRARRSQ). The segment at 1–21 (MAVPKRKMSRSNTRARRSQWK) is disordered.

The protein belongs to the bacterial ribosomal protein bL32 family.

The sequence is that of Large ribosomal subunit protein bL32 from Arthrobacter sp. (strain FB24).